Consider the following 380-residue polypeptide: MGIQGLAKLIGDHAPGAMKENEIKNYFGRKVAIDASMSIYQFLIAVRQDGNMLTNDAGEATSHLMGMFYRTIRMVDNGIKPVYVFDGKPPNMKSGELAKRAERREEAQKALEKAEEAGEAEDVNKFQKRLVKVTKEHNAECKKLLTLMGIPYVDAPCEAEAQCAELAKKGKVYAAGTEDMDVLTFGTNIMLRHLTFSEARKMPIKEYYYDRLLAELDLTQDQFIDLCILLGCDYCDSIRGIGPKRAIELIRQYKSIEEILKHIDTKKFPVPEDWPYDQARKLFKEPEVTPADQVELKWVDPDEEGLVQYMSNEKGFSEDRIKNGAKKLKNARHTSTQGRLDSFFKVMSSPSVKRKEPPKGAKGSASKKAKMSGGKFKKPK.

The interval 1 to 104 (MGIQGLAKLI…GELAKRAERR (104 aa)) is N-domain. Asp34 contributes to the Mg(2+) binding site. DNA is bound by residues Arg47 and Arg70. Residues Asp86, Glu158, Glu160, Asp179, and Asp181 each contribute to the Mg(2+) site. The I-domain stretch occupies residues 122–253 (DVNKFQKRLV…KRAIELIRQY (132 aa)). Glu158 serves as a coordination point for DNA. DNA is bound by residues Gly231 and Asp233. Residue Asp233 participates in Mg(2+) binding. The disordered stretch occupies residues 328–380 (LKNARHTSTQGRLDSFFKVMSSPSVKRKEPPKGAKGSASKKAKMSGGKFKKPK). Residues 336–344 (TQGRLDSFF) are interaction with PCNA. The span at 365-380 (ASKKAKMSGGKFKKPK) shows a compositional bias: basic residues.

This sequence belongs to the XPG/RAD2 endonuclease family. FEN1 subfamily. Interacts with PCNA. Three molecules of FEN1 bind to one PCNA trimer with each molecule binding to one PCNA monomer. PCNA stimulates the nuclease activity without altering cleavage specificity. Mg(2+) serves as cofactor. Post-translationally, phosphorylated. Phosphorylation upon DNA damage induces relocalization to the nuclear plasma.

The protein resides in the nucleus. It localises to the nucleolus. Its subcellular location is the nucleoplasm. It is found in the mitochondrion. Functionally, structure-specific nuclease with 5'-flap endonuclease and 5'-3' exonuclease activities involved in DNA replication and repair. During DNA replication, cleaves the 5'-overhanging flap structure that is generated by displacement synthesis when DNA polymerase encounters the 5'-end of a downstream Okazaki fragment. It enters the flap from the 5'-end and then tracks to cleave the flap base, leaving a nick for ligation. Also involved in the long patch base excision repair (LP-BER) pathway, by cleaving within the apurinic/apyrimidinic (AP) site-terminated flap. Acts as a genome stabilization factor that prevents flaps from equilibrating into structures that lead to duplications and deletions. Also possesses 5'-3' exonuclease activity on nicked or gapped double-stranded DNA, and exhibits RNase H activity. Also involved in replication and repair of rDNA and in repairing mitochondrial DNA. This Branchiostoma floridae (Florida lancelet) protein is Flap endonuclease 1.